The following is a 341-amino-acid chain: tRNA N6-adenosine threonylcarbamoyltransferase (341 aa).

Fe cation is bound by residues His-111 and His-115. Substrate-binding positions include 133–137 (AVSGG), Asp-166, Gly-179, Asp-183, and Asn-273. Residue Asp-301 coordinates Fe cation.

It belongs to the KAE1 / TsaD family. It depends on Fe(2+) as a cofactor.

It localises to the cytoplasm. The catalysed reaction is L-threonylcarbamoyladenylate + adenosine(37) in tRNA = N(6)-L-threonylcarbamoyladenosine(37) in tRNA + AMP + H(+). Required for the formation of a threonylcarbamoyl group on adenosine at position 37 (t(6)A37) in tRNAs that read codons beginning with adenine. Is involved in the transfer of the threonylcarbamoyl moiety of threonylcarbamoyl-AMP (TC-AMP) to the N6 group of A37, together with TsaE and TsaB. TsaD likely plays a direct catalytic role in this reaction. The polypeptide is tRNA N6-adenosine threonylcarbamoyltransferase (Geobacter metallireducens (strain ATCC 53774 / DSM 7210 / GS-15)).